The chain runs to 74 residues: Translation initiation factor IF-1 (74 aa).

The S1-like domain maps to 1–72 (MADTEKLKML…TRGRITYRHR (72 aa)).

Belongs to the IF-1 family. Component of the 30S ribosomal translation pre-initiation complex which assembles on the 30S ribosome in the order IF-2 and IF-3, IF-1 and N-formylmethionyl-tRNA(fMet); mRNA recruitment can occur at any time during PIC assembly.

Its subcellular location is the cytoplasm. Its function is as follows. One of the essential components for the initiation of protein synthesis. Stabilizes the binding of IF-2 and IF-3 on the 30S subunit to which N-formylmethionyl-tRNA(fMet) subsequently binds. Helps modulate mRNA selection, yielding the 30S pre-initiation complex (PIC). Upon addition of the 50S ribosomal subunit IF-1, IF-2 and IF-3 are released leaving the mature 70S translation initiation complex. The sequence is that of Translation initiation factor IF-1 from Ureaplasma parvum serovar 3 (strain ATCC 700970).